The chain runs to 331 residues: Holliday junction branch migration complex subunit RuvB (331 aa).

The interval 1–182 is large ATPase domain (RuvB-L); the sequence is MSSDTLHKYE…FGIPLHLEFY (182 aa). ATP-binding positions include Leu21, Arg22, Gly63, Lys66, Thr67, Thr68, 129–131, Arg172, Tyr182, and Arg219; that span reads EDY. Thr67 contributes to the Mg(2+) binding site. The small ATPAse domain (RuvB-S) stretch occupies residues 183–254; that stretch reads SVDELVLVIK…FANSALFRLG (72 aa). The head domain (RuvB-H) stretch occupies residues 257-331; it reads GAGFDKMDLK…FEYLLSSKYI (75 aa). The DNA site is built by Arg310 and Arg315.

It belongs to the RuvB family. Homohexamer. Forms an RuvA(8)-RuvB(12)-Holliday junction (HJ) complex. HJ DNA is sandwiched between 2 RuvA tetramers; dsDNA enters through RuvA and exits via RuvB. An RuvB hexamer assembles on each DNA strand where it exits the tetramer. Each RuvB hexamer is contacted by two RuvA subunits (via domain III) on 2 adjacent RuvB subunits; this complex drives branch migration. In the full resolvosome a probable DNA-RuvA(4)-RuvB(12)-RuvC(2) complex forms which resolves the HJ.

It is found in the cytoplasm. It catalyses the reaction ATP + H2O = ADP + phosphate + H(+). The RuvA-RuvB-RuvC complex processes Holliday junction (HJ) DNA during genetic recombination and DNA repair, while the RuvA-RuvB complex plays an important role in the rescue of blocked DNA replication forks via replication fork reversal (RFR). RuvA specifically binds to HJ cruciform DNA, conferring on it an open structure. The RuvB hexamer acts as an ATP-dependent pump, pulling dsDNA into and through the RuvAB complex. RuvB forms 2 homohexamers on either side of HJ DNA bound by 1 or 2 RuvA tetramers; 4 subunits per hexamer contact DNA at a time. Coordinated motions by a converter formed by DNA-disengaged RuvB subunits stimulates ATP hydrolysis and nucleotide exchange. Immobilization of the converter enables RuvB to convert the ATP-contained energy into a lever motion, pulling 2 nucleotides of DNA out of the RuvA tetramer per ATP hydrolyzed, thus driving DNA branch migration. The RuvB motors rotate together with the DNA substrate, which together with the progressing nucleotide cycle form the mechanistic basis for DNA recombination by continuous HJ branch migration. Branch migration allows RuvC to scan DNA until it finds its consensus sequence, where it cleaves and resolves cruciform DNA. In Anaplasma marginale (strain St. Maries), this protein is Holliday junction branch migration complex subunit RuvB.